A 433-amino-acid polypeptide reads, in one-letter code: Protein slt1 (433 aa).

Disordered stretches follow at residues 159–184, 200–234, and 252–433; these read SPEE…SEYA, NAPE…EELS, and SNKR…DEDA. Composition is skewed to polar residues over residues 172 to 184 and 215 to 228; these read DQQT…SEYA and TLPN…QASV. A phosphoserine mark is found at S227, S229, and S269. The span at 343-353 shows a compositional bias: basic and acidic residues; sequence IDTKAGEKLTD. Residues 385 to 421 show a composition bias toward polar residues; that stretch reads EGSNNHEQGSFNEPKSNVDSNDSASPKRPSSQASLRH. Phosphoserine occurs at positions 409, 415, and 418.

This Schizosaccharomyces pombe (strain 972 / ATCC 24843) (Fission yeast) protein is Protein slt1 (slt1).